A 299-amino-acid polypeptide reads, in one-letter code: Leucine zipper transcription factor-like protein 1 (299 aa).

Residues glycine 145–aspartate 299 are interaction with BSS9. The stretch at glycine 145–aspartate 299 forms a coiled coil.

This sequence belongs to the LZTFL1 family. In terms of assembly, self-associates. Interacts with BBS9; the interaction mediates the association of LZTL1 with the BBsome complex and regulates BBSome ciliary trafficking.

The protein resides in the cytoplasm. Its function is as follows. Regulates ciliary localization of the BBSome complex. Together with the BBSome complex, controls SMO ciliary trafficking and contributes to the sonic hedgehog (SHH) pathway regulation. May play a role in neurite outgrowth. May have tumor suppressor function. In Rattus norvegicus (Rat), this protein is Leucine zipper transcription factor-like protein 1 (Lztfl1).